We begin with the raw amino-acid sequence, 372 residues long: AA9 family lytic polysaccharide monooxygenase C (372 aa).

An N-terminal signal peptide occupies residues methionine 1 to serine 16. Residues histidine 17 and histidine 99 each contribute to the Cu(2+) site. Residues cysteine 59 and cysteine 189 are joined by a disulfide bond. Positions 174 and 184 each coordinate O2. Residue tyrosine 186 coordinates Cu(2+).

Belongs to the polysaccharide monooxygenase AA9 family. Cu(2+) is required as a cofactor.

It localises to the secreted. It catalyses the reaction [(1-&gt;4)-beta-D-glucosyl]n+m + reduced acceptor + O2 = 4-dehydro-beta-D-glucosyl-[(1-&gt;4)-beta-D-glucosyl]n-1 + [(1-&gt;4)-beta-D-glucosyl]m + acceptor + H2O.. Functionally, lytic polysaccharide monooxygenase (LPMO) that depolymerizes crystalline and amorphous polysaccharides via the oxidation of scissile alpha- or beta-(1-4)-glycosidic bonds, yielding C1 or C4 oxidation products. Catalysis by LPMOs requires the reduction of the active-site copper from Cu(II) to Cu(I) by a reducing agent and H(2)O(2) or O(2) as a cosubstrate. The chain is AA9 family lytic polysaccharide monooxygenase C from Aspergillus tamarii.